Reading from the N-terminus, the 100-residue chain is Large ribosomal subunit protein bL21 (100 aa).

This sequence belongs to the bacterial ribosomal protein bL21 family. As to quaternary structure, part of the 50S ribosomal subunit. Contacts protein L20.

This protein binds to 23S rRNA in the presence of protein L20. The sequence is that of Large ribosomal subunit protein bL21 from Paramagnetospirillum magneticum (strain ATCC 700264 / AMB-1) (Magnetospirillum magneticum).